Here is a 218-residue protein sequence, read N- to C-terminus: Glutathione S-transferase Mu 4 (218 aa).

The GST N-terminal domain maps to 1-88 (MPMTLGYWDI…YIARKHNLCG (88 aa)). Glutathione-binding positions include 7 to 8 (YW), 46 to 50 (WLSEK), 59 to 60 (NL), and 72 to 73 (QS). In terms of domain architecture, GST C-terminal spans 90–208 (TEEEKIRVDI…KTSRFLRTPL (119 aa)). Y116 lines the substrate pocket.

It belongs to the GST superfamily. Mu family. As to quaternary structure, homodimer.

It localises to the cytoplasm. It catalyses the reaction RX + glutathione = an S-substituted glutathione + a halide anion + H(+). The enzyme catalyses 1-chloro-2,4-dinitrobenzene + glutathione = 2,4-dinitrophenyl-S-glutathione + chloride + H(+). It carries out the reaction (13S,14S)-epoxy-(4Z,7Z,9E,11E,16Z,19Z)-docosahexaenoate + glutathione = (13R)-S-glutathionyl-(14S)-hydroxy-(4Z,7Z,9E,11E,16Z,19Z)-docosahexaenoate. The catalysed reaction is leukotriene C4 = leukotriene A4 + glutathione. Conjugation of reduced glutathione to a wide number of exogenous and endogenous hydrophobic electrophiles. Catalyzes the conjugation of leukotriene A4 with reduced glutathione (GSH) to form leukotriene C4. Can also catalyze the transfer of a glutathionyl group from glutathione (GSH) to 13(S),14(S)-epoxy-docosahexaenoic acid to form maresin conjugate in tissue regeneration 1 (MCTR1), a bioactive lipid mediator that possess potent anti-inflammatory and proresolving actions. The sequence is that of Glutathione S-transferase Mu 4 (Gstm4) from Rattus norvegicus (Rat).